Here is a 185-residue protein sequence, read N- to C-terminus: ATP-dependent protease subunit HslV (185 aa).

Thr-6 is an active-site residue. Residues Gly-162, Cys-165, and Thr-168 each contribute to the Na(+) site.

The protein belongs to the peptidase T1B family. HslV subfamily. As to quaternary structure, a double ring-shaped homohexamer of HslV is capped on each side by a ring-shaped HslU homohexamer. The assembly of the HslU/HslV complex is dependent on binding of ATP.

The protein localises to the cytoplasm. It carries out the reaction ATP-dependent cleavage of peptide bonds with broad specificity.. Allosterically activated by HslU binding. Protease subunit of a proteasome-like degradation complex believed to be a general protein degrading machinery. In Nitratidesulfovibrio vulgaris (strain DSM 19637 / Miyazaki F) (Desulfovibrio vulgaris), this protein is ATP-dependent protease subunit HslV.